An 81-amino-acid chain; its full sequence is D-alanyl carrier protein (81 aa).

A Carrier domain is found at 1-81 (MADEAIKNGV…KIIAKVEQAQ (81 aa)). An O-(pantetheine 4'-phosphoryl)serine modification is found at Ser39.

It belongs to the DltC family. 4'-phosphopantetheine is transferred from CoA to a specific serine of apo-DCP.

The protein localises to the cytoplasm. The protein operates within cell wall biogenesis; lipoteichoic acid biosynthesis. In terms of biological role, carrier protein involved in the D-alanylation of lipoteichoic acid (LTA). The loading of thioester-linked D-alanine onto DltC is catalyzed by D-alanine--D-alanyl carrier protein ligase DltA. The DltC-carried D-alanyl group is further transferred to cell membrane phosphatidylglycerol (PG) by forming an ester bond, probably catalyzed by DltD. D-alanylation of LTA plays an important role in modulating the properties of the cell wall in Gram-positive bacteria, influencing the net charge of the cell wall. The chain is D-alanyl carrier protein from Lacticaseibacillus casei (strain BL23) (Lactobacillus casei).